Here is a 672-residue protein sequence, read N- to C-terminus: MAEAPASPVPLSPLEVELDPEFEPQSRPRSCTWPLQRPELQASPAKPSGETAADSMIPEEDDDEDDEDGGGRASSAMVIGGGVSSTLGSGLLLEDSAMLLAPGGQDLGSGPASAAGALSGGTPTQLQPQQPLPQPQPGAAGGSGQPRKCSSRRNAWGNLSYADLITRAIESSPDKRLTLSQIYEWMVRCVPYFKDKGDSNSSAGWKNSIRHNLSLHSRFMRVQNEGTGKSSWWIINPDGGKSGKAPRRRAVSMDNSNKYTKSRGRAAKKKAALQAAPESADDSPSQLSKWPGSPTSRSSDELDAWTDFRSRTNSNASTVSGRLSPILASTELDDVQDDDGPLSPMLYSSSASLSPSVSKPCTVELPRLTDMAGTMNLNDGLAENLMDDLLDNIALPPSQPSPPGGLMQRGSSFPYTAKSSGLGSPTGSFNSTVFGPSSLNSLRQSPMQTIQENRPATFSSVSHYGNQTLQDLLASDSLSHSDVMMTQSDPLMSQASTAVSAQNARRNVMLRNDPMMSFAAQPTQGSLVNQNLLHHQHQTQGALGGSRALSNSVSNMGLSDSSSLGSAKHQQQSPASQSMQTLSDSLSGSSLYSASANLPVMGHDKFPSDLDLDMFNGSLECDMESIIRSELMDADGLDFNFDSLISTQNVVGLNVGNFTGAKQASSQSWVPG.

Disordered regions lie at residues 1–85 and 110–152; these read MAEA…GVSS and GPAS…CSSR. Ser30 carries the post-translational modification Phosphoserine. Position 32 is a phosphothreonine (Thr32). The residue at position 46 (Lys46) is an N6-methyllysine. A compositionally biased stretch (acidic residues) spans 57-68; sequence IPEEDDDEDDED. The tract at residues 80–108 is required for mitochondrial import; the sequence is GGGVSSTLGSGLLLEDSAMLLAPGGQDLG. The span at 110-129 shows a compositional bias: low complexity; that stretch reads GPASAAGALSGGTPTQLQPQ. At Lys148 the chain carries N6-methyllysine. Residues 156 to 250 constitute a DNA-binding region (fork-head); it reads WGNLSYADLI…KSGKAPRRRA (95 aa). Thr178 bears the Phosphothreonine mark. 2 positions are modified to phosphoserine: Ser208 and Ser214. N6-methyllysine is present on Lys229. The disordered stretch occupies residues 230–301; that stretch reads SSWWIINPDG…GSPTSRSSDE (72 aa). Position 241 is an N6-acetyllysine (Lys241). The short motif at 241–258 is the Nuclear localization signal element; it reads KSGKAPRRRAVSMDNSNK. Phosphoserine is present on Ser252. The span at 260–271 shows a compositional bias: basic residues; sequence TKSRGRAAKKKA. An N6-methyllysine mark is found at Lys261 and Lys270. 2 positions are modified to phosphoserine: Ser279 and Ser283. A compositionally biased stretch (polar residues) spans 282-297; it reads DSPSQLSKWPGSPTSR. Position 289 is an N6-methyllysine (Lys289). Ser293 is subject to Phosphoserine. A Phosphoserine; by CaMK2A modification is found at Ser298. The tract at residues 299-672 is mediates interaction with CHUK/IKKA and IKBKB/IKKB; that stretch reads SDELDAWTDF…QASSQSWVPG (374 aa). Ser310 bears the Phosphoserine mark. Ser314 is modified (phosphoserine; by SGK1). Residues Ser398 and Ser412 each carry the phosphoserine; by AMPK modification. Disordered regions lie at residues 399–441 and 535–583; these read QPSP…SLNS and HQHQ…QTLS. Composition is skewed to polar residues over residues 409-441 and 548-577; these read RGSSFPYTAKSSGLGSPTGSFNSTVFGPSSLNS and ALSNSVSNMGLSDSSSLGSAKHQQQSPASQ. Lys418 carries the N6-methyllysine modification. A Phosphoserine modification is found at Ser420. The residue at position 550 (Ser550) is a Phosphoserine; by MAPKAPK5. The residue at position 554 (Ser554) is a Phosphoserine; by AMPK and MAPKAPK5. Phosphoserine; by AMPK occurs at positions 587 and 625. Position 643 is a phosphoserine; by IKKB (Ser643).

As to quaternary structure, upon metabolic stress, forms a complex composed of FOXO3, SIRT3 and mitochondrial RNA polymerase POLRMT; the complex is recruited to mtDNA in a SIRT3-dependent manner. Also forms a complex composed of FOXO3, SIRT3, TFAM and POLRMT. Interacts with SIRT2; the interaction occurs independently of SIRT2 deacetylase activity. Interacts with YWHAB/14-3-3-beta and YWHAZ/14-3-3-zeta, which are required for cytosolic sequestration. Upon oxidative stress, interacts with STK4/MST1, which disrupts interaction with YWHAB/14-3-3-beta and leads to nuclear translocation. Interacts with PIM1. Interacts with DDIT3/CHOP. Interacts (deacetylated form) with SKP2. Interacts with CHUK and IKBKB. Interacts with CAMK2A, CAMK2B and calcineurin A. Interacts with NUPR1; this interaction represses FOXO3 transactivation. Deacetylation by SIRT1 or SIRT2 stimulates interaction of FOXO3 with SKP2 and facilitates SCF(SKP2)-mediated FOXO3 ubiquitination and proteasomal degradation. Deacetylation by SIRT2 stimulates FOXO3-mediated transcriptional activity in response to oxidative stress. Deacetylated by SIRT3. Deacetylation by SIRT3 stimulates FOXO3-mediated mtDNA transcriptional activity in response to metabolic stress. Post-translationally, in the presence of survival factors such as IGF1, phosphorylated on Thr-32 and Ser-252 by AKT1/PKB. This phosphorylated form then interacts with 14-3-3 proteins and is retained in the cytoplasm. Survival factor withdrawal induces dephosphorylation and promotes translocation to the nucleus where the dephosphorylated protein induces transcription of target genes and triggers apoptosis. Although AKT1/PKB doesn't appear to phosphorylate Ser-314 directly, it may activate other kinases that trigger phosphorylation at this residue. Phosphorylated by STK4/MST1 on Ser-208 upon oxidative stress, which leads to dissociation from YWHAB/14-3-3-beta and nuclear translocation. Phosphorylated by PIM1. Phosphorylation by AMPK leads to the activation of transcriptional activity without affecting subcellular localization. Phosphorylated by AMPK on Ser-30 in response to metabolic stress which mediates FOXO3 mitochondrial translocation. Phosphorylation by MAPKAPK5 promotes nuclear localization and DNA-binding, leading to induction of miR-34b and miR-34c expression, 2 post-transcriptional regulators of MYC that bind to the 3'UTR of MYC transcript and prevent its translation. Phosphorylated by CHUK/IKKA and IKBKB/IKKB. TNF-induced inactivation of FOXO3 requires its phosphorylation at Ser-643 by IKBKB/IKKB which promotes FOXO3 retention in the cytoplasm, polyubiquitination and ubiquitin-mediated proteasomal degradation. May be dephosphorylated by calcineurin A on Ser-298 which abolishes FOXO3 transcriptional activity. Phosphorylation at Ser-252 promotes its degradation by the proteasome. Dephosphorylation at Ser-252 by protein phosphatase 2A (PPP2CA) promotes its stabilization; interaction with PPP2CA is enhanced by AMBRA1. In terms of processing, heavily methylated by SET9 which decreases stability, while moderately increasing transcriptional activity. The main methylation site is Lys-270. Methylation doesn't affect subcellular location. Polyubiquitinated. Ubiquitinated by a SCF complex containing SKP2, leading to proteasomal degradation. Post-translationally, the N-terminus is cleaved following import into the mitochondrion. In terms of tissue distribution, expressed in white and brown adipose tissues (at protein level). Expressed in liver, kidney, lung and colon (at protein level). Expressed in skeletal muscles (at protein level).

The protein resides in the cytoplasm. Its subcellular location is the cytosol. The protein localises to the nucleus. It localises to the mitochondrion matrix. It is found in the mitochondrion outer membrane. Its function is as follows. Transcriptional activator that recognizes and binds to the DNA sequence 5'-[AG]TAAA[TC]A-3' and regulates different processes, such as apoptosis and autophagy. Acts as a positive regulator of autophagy in skeletal muscle: in starved cells, enters the nucleus following dephosphorylation and binds the promoters of autophagy genes, such as GABARAP1L, MAP1LC3B and ATG12, thereby activating their expression, resulting in proteolysis of skeletal muscle proteins. Triggers apoptosis in the absence of survival factors, including neuronal cell death upon oxidative stress. Participates in post-transcriptional regulation of MYC: following phosphorylation by MAPKAPK5, promotes induction of miR-34b and miR-34c expression, 2 post-transcriptional regulators of MYC that bind to the 3'UTR of MYC transcript and prevent its translation. In response to metabolic stress, translocates into the mitochondria where it promotes mtDNA transcription. Also acts as a key regulator of chondrogenic commitment of skeletal progenitor cells in response to lipid availability: when lipids levels are low, translocates to the nucleus and promotes expression of SOX9, which induces chondrogenic commitment and suppresses fatty acid oxidation. Also acts as a key regulator of regulatory T-cells (Treg) differentiation by activating expression of FOXP3. The protein is Forkhead box protein O3 of Mus musculus (Mouse).